Reading from the N-terminus, the 423-residue chain is Protein IQ-DOMAIN 16 (423 aa).

IQ domains are found at residues 99–127 (RHWA…GIVK) and 128–150 (LQAL…CIKA). Residues 231-251 (QKKLEIAIKREKAQALALSNQ) adopt a coiled-coil conformation. The tract at residues 235 to 252 (EIAIKREKAQALALSNQI) is calmodulin-binding.

It belongs to the IQD family. As to quaternary structure, binds to multiple calmodulin (CaM) in the presence of Ca(2+) and CaM-like proteins.

It localises to the cytoplasm. The protein resides in the cytoskeleton. The protein localises to the cell membrane. In terms of biological role, may be involved in cooperative interactions with calmodulins or calmodulin-like proteins. Recruits calmodulin proteins to microtubules, thus being a potential scaffold in cellular signaling and trafficking. Regulates cell shape and elongation in aerial organs (i.e. cotyledons, leaves, and hypocotyls) probably by regulating cortical microtubules (MT) arrays orientation. May associate with nucleic acids and regulate gene expression at the transcriptional or post-transcriptional level. The sequence is that of Protein IQ-DOMAIN 16 from Arabidopsis thaliana (Mouse-ear cress).